A 93-amino-acid polypeptide reads, in one-letter code: Small ribosomal subunit protein uS19 (93 aa).

This sequence belongs to the universal ribosomal protein uS19 family.

Protein S19 forms a complex with S13 that binds strongly to the 16S ribosomal RNA. In Dehalococcoides mccartyi (strain ATCC BAA-2266 / KCTC 15142 / 195) (Dehalococcoides ethenogenes (strain 195)), this protein is Small ribosomal subunit protein uS19.